The primary structure comprises 439 residues: UPF0597 protein Dalk_4447 (439 aa).

This sequence belongs to the UPF0597 family.

The chain is UPF0597 protein Dalk_4447 from Desulfatibacillum aliphaticivorans.